Here is a 163-residue protein sequence, read N- to C-terminus: Transcription antitermination protein NusB (163 aa).

Residues 1 to 21 form a disordered region; sequence MTTFLSDSEHPQDVKAPPKSA.

It belongs to the NusB family.

Its function is as follows. Involved in transcription antitermination. Required for transcription of ribosomal RNA (rRNA) genes. Binds specifically to the boxA antiterminator sequence of the ribosomal RNA (rrn) operons. The sequence is that of Transcription antitermination protein NusB from Dechloromonas aromatica (strain RCB).